We begin with the raw amino-acid sequence, 297 residues long: tRNA-cytidine(32) 2-sulfurtransferase (297 aa).

The PP-loop motif motif lies at 45–50 (SGGKDS). Residues cysteine 120, cysteine 123, and cysteine 211 each contribute to the [4Fe-4S] cluster site.

The protein belongs to the TtcA family. In terms of assembly, homodimer. Mg(2+) is required as a cofactor. [4Fe-4S] cluster serves as cofactor.

The protein localises to the cytoplasm. The catalysed reaction is cytidine(32) in tRNA + S-sulfanyl-L-cysteinyl-[cysteine desulfurase] + AH2 + ATP = 2-thiocytidine(32) in tRNA + L-cysteinyl-[cysteine desulfurase] + A + AMP + diphosphate + H(+). The protein operates within tRNA modification. In terms of biological role, catalyzes the ATP-dependent 2-thiolation of cytidine in position 32 of tRNA, to form 2-thiocytidine (s(2)C32). The sulfur atoms are provided by the cysteine/cysteine desulfurase (IscS) system. The protein is tRNA-cytidine(32) 2-sulfurtransferase of Vibrio campbellii (strain ATCC BAA-1116).